A 595-amino-acid polypeptide reads, in one-letter code: RuBisCO large subunit-binding protein subunit beta, chloroplastic (595 aa).

The transit peptide at 1–49 directs the protein to the chloroplast; the sequence is MASTFSATTSSCNLSSSAAISSFPLAAGKRNANKVVLPRKNRNVKVSAM.

It belongs to the chaperonin (HSP60) family. As to quaternary structure, oligomer of probably six alpha and six beta subunits.

The protein localises to the plastid. Its subcellular location is the chloroplast. In terms of biological role, this protein binds RuBisCO small and large subunits and is implicated in the assembly of the enzyme oligomer. In Pisum sativum (Garden pea), this protein is RuBisCO large subunit-binding protein subunit beta, chloroplastic.